Consider the following 92-residue polypeptide: MARVTVEDAVKQIGNRFDMILVAARRARQIAVQGKDPMVEEQNDKPTVIALREIEKGLVNAGTLDADERQSVREREAAEIAAVAAIAEGRSL.

The protein belongs to the RNA polymerase subunit omega family. The RNAP catalytic core consists of 2 alpha, 1 beta, 1 beta' and 1 omega subunit. When a sigma factor is associated with the core the holoenzyme is formed, which can initiate transcription.

The catalysed reaction is RNA(n) + a ribonucleoside 5'-triphosphate = RNA(n+1) + diphosphate. Functionally, promotes RNA polymerase assembly. Latches the N- and C-terminal regions of the beta' subunit thereby facilitating its interaction with the beta and alpha subunits. This Shewanella amazonensis (strain ATCC BAA-1098 / SB2B) protein is DNA-directed RNA polymerase subunit omega.